The sequence spans 783 residues: DNA repair and recombination protein RAD54-like (783 aa).

The tract at residues 2 to 9 is required for chromatin remodeling, strand pairing activities and coupling of ATPase activity; the sequence is RRSLAPSQ. At Thr22 the chain carries Phosphothreonine. The region spanning 165–340 is the Helicase ATP-binding domain; sequence EGKRGNFNGC…FSLVNFVNPE (176 aa). Position 178–185 (178–185) interacts with ATP; sequence DEMGLGKT. Positions 291–294 match the DEGH box motif; it reads DEGH. Residues 497–654 enclose the Helicase C-terminal domain; the sequence is LLDFMLAAIR…NNESSEKHFT (158 aa). A disordered region spans residues 737 to 783; sequence AESKPAAITEDDESEQQQQSPKRTSKNDDNDEDFDPENSAEEQFLGF. Acidic residues predominate over residues 765–776; it reads DNDEDFDPENSA.

The protein belongs to the SNF2/RAD54 helicase family. Interacts (via N-terminus) with spn-A/Rad51.

The protein localises to the nucleus. Functionally, involved in mitotic DNA repair and meiotic recombination. Functions in the recombinational DNA repair pathway. Essential for interhomolog gene conversion (GC), but may have a less important role in intersister GC than spn-A/Rad51. In the presence of DNA, spn-A/Rad51 enhances the ATPase activity of okr/Rad54. The sequence is that of DNA repair and recombination protein RAD54-like from Drosophila mojavensis (Fruit fly).